Reading from the N-terminus, the 591-residue chain is Glutathione hydrolase (591 aa).

The N-terminal stretch at 1–41 (MASKWIEEQPLVHRRDIRISSKSRIAAGLLVLLVLWRYGLP) is a signal peptide. Position 122 (Arg122) interacts with L-glutamate. N-linked (GlcNAc...) asparagine glycosylation is found at Asn135, Asn270, and Asn389. Catalysis depends on Thr393, which acts as the Nucleophile. L-glutamate contacts are provided by residues Thr411, Glu432, and 464–465 (SA). Asn534 carries an N-linked (GlcNAc...) asparagine glycan.

Belongs to the gamma-glutamyltransferase family.

It catalyses the reaction an N-terminal (5-L-glutamyl)-[peptide] + an alpha-amino acid = 5-L-glutamyl amino acid + an N-terminal L-alpha-aminoacyl-[peptide]. The catalysed reaction is glutathione + H2O = L-cysteinylglycine + L-glutamate. The enzyme catalyses an S-substituted glutathione + H2O = an S-substituted L-cysteinylglycine + L-glutamate. It functions in the pathway mycotoxin biosynthesis. Its function is as follows. Gamma-glutamyltransferase; part of the gene cluster that mediates the biosynthesis of the secondary metabolite ustiloxin B, an antimitotic tetrapeptide. First, ustA is processed by the subtilisin-like endoprotease Kex2 that is outside the ustiloxin B gene cluster, at the C-terminal side of Arg-Lys, after transfer to Golgi apparatus through the endoplasmic reticulum (ER). Cleavage by KEX2 generates 16 peptides YAIG-I to YAIG-XVI. To process the precursor peptide further, at least two peptidases are necessary to cleave the N-terminal and C-terminal sides of the Tyr-Ala-Ile-Gly core peptide which serves as backbone for the synthesis of ustiloxin B, through cyclization and modification of the tyrosine with a non-protein coding amino acid, norvaline. One of the two peptidases must be the serine peptidase ustP; and the other pepdidase is probably ustH. Macrocyclization of the core peptide derived from ustA requires the tyrosinase ustQ, as well as the homologous oxidases ustYa and ustYb, and leads to the production of the first cyclization product N-desmethylustiloxin F. For the formation of N-desmethylustiloxin F, three oxidation steps are required, hydroxylation at the benzylic position, hydroxylation at either the aromatic ring of Tyr or beta-position of Ile, and oxidative cyclization. UstQ may catalyze the oxidation of a phenol moiety, whereas the ustYa and ustYb are most likely responsible for the remaining two-step oxidations. N-desmethylustiloxin F is then methylated by ustM to yield ustiloxin F which in turn substrate of the cytochrome P450 monooxygenase ustC which catalyzes the formation of S-deoxyustiloxin H. The flavoprotein monooxygenases ustF1 and ustF2 then participate in the modification of the side chain of S-deoxyustiloxin H, leading to the synthesis of an oxime intermediate, via ustiloxin H. Finally, carboxylative dehydration performed by the cysteine desulfurase-like protein ustD yields ustiloxin B. The sequence is that of Glutathione hydrolase from Aspergillus flavus (strain ATCC 200026 / FGSC A1120 / IAM 13836 / NRRL 3357 / JCM 12722 / SRRC 167).